A 181-amino-acid polypeptide reads, in one-letter code: ATP synthase subunit b 2 (181 aa).

Residues M1–G18 show a composition bias toward low complexity. The interval M1 to S20 is disordered. A helical transmembrane segment spans residues I34–P54.

Belongs to the ATPase B chain family. F-type ATPases have 2 components, F(1) - the catalytic core - and F(0) - the membrane proton channel. F(1) has five subunits: alpha(3), beta(3), gamma(1), delta(1), epsilon(1). F(0) has three main subunits: a(1), b(2) and c(10-14). The alpha and beta chains form an alternating ring which encloses part of the gamma chain. F(1) is attached to F(0) by a central stalk formed by the gamma and epsilon chains, while a peripheral stalk is formed by the delta and b chains.

It localises to the cell inner membrane. In terms of biological role, f(1)F(0) ATP synthase produces ATP from ADP in the presence of a proton or sodium gradient. F-type ATPases consist of two structural domains, F(1) containing the extramembraneous catalytic core and F(0) containing the membrane proton channel, linked together by a central stalk and a peripheral stalk. During catalysis, ATP synthesis in the catalytic domain of F(1) is coupled via a rotary mechanism of the central stalk subunits to proton translocation. Functionally, component of the F(0) channel, it forms part of the peripheral stalk, linking F(1) to F(0). The b'-subunit is a diverged and duplicated form of b found in plants and photosynthetic bacteria. The protein is ATP synthase subunit b 2 (atpF2) of Ruegeria sp. (strain TM1040) (Silicibacter sp.).